We begin with the raw amino-acid sequence, 209 residues long: U1 small nuclear ribonucleoprotein C (209 aa).

The segment at histidine 4–aspartate 36 adopts a Matrin-type zinc-finger fold. Positions proline 72 to methionine 87 are enriched in low complexity. The segment at proline 72 to arginine 209 is disordered. Composition is skewed to pro residues over residues glycine 93–proline 150 and proline 159–proline 191.

The protein belongs to the U1 small nuclear ribonucleoprotein C family. In terms of assembly, U1 snRNP is composed of the 7 core Sm proteins B/B', D1, D2, D3, E, F and G that assemble in a heptameric protein ring on the Sm site of the small nuclear RNA to form the core snRNP, and at least 3 U1 snRNP-specific proteins U1-70K, U1-A and U1-C. U1-C interacts with U1 snRNA and the 5' splice-site region of the pre-mRNA.

The protein localises to the nucleus. Its function is as follows. Component of the spliceosomal U1 snRNP, which is essential for recognition of the pre-mRNA 5' splice-site and the subsequent assembly of the spliceosome. U1-C is directly involved in initial 5' splice-site recognition for both constitutive and regulated alternative splicing. The interaction with the 5' splice-site seems to precede base-pairing between the pre-mRNA and the U1 snRNA. Stimulates commitment or early (E) complex formation by stabilizing the base pairing of the 5' end of the U1 snRNA and the 5' splice-site region. The protein is U1 small nuclear ribonucleoprotein C of Coprinopsis cinerea (strain Okayama-7 / 130 / ATCC MYA-4618 / FGSC 9003) (Inky cap fungus).